The sequence spans 373 residues: UDP-3-O-acylglucosamine N-acyltransferase 2 (373 aa).

The active-site Proton acceptor is the His257. Positions 346 to 373 are disordered; sequence DGRTAASAEAAAPSSDATGVDQPDQAAS. Low complexity predominate over residues 350 to 362; sequence AASAEAAAPSSDA.

It belongs to the transferase hexapeptide repeat family. LpxD subfamily. Homotrimer.

The catalysed reaction is a UDP-3-O-[(3R)-3-hydroxyacyl]-alpha-D-glucosamine + a (3R)-hydroxyacyl-[ACP] = a UDP-2-N,3-O-bis[(3R)-3-hydroxyacyl]-alpha-D-glucosamine + holo-[ACP] + H(+). Its pathway is bacterial outer membrane biogenesis; LPS lipid A biosynthesis. In terms of biological role, catalyzes the N-acylation of UDP-3-O-acylglucosamine using 3-hydroxyacyl-ACP as the acyl donor. Is involved in the biosynthesis of lipid A, a phosphorylated glycolipid that anchors the lipopolysaccharide to the outer membrane of the cell. The polypeptide is UDP-3-O-acylglucosamine N-acyltransferase 2 (Rhodopseudomonas palustris (strain BisB18)).